The primary structure comprises 208 residues: Pyrophosphate-energized proton pump 2 (208 aa).

The next 5 membrane-spanning stretches (helical) occupy residues 19-39, 54-74, 89-109, 140-160, and 167-187; these read AYPL…TFFV, GLIV…SFTI, GGNL…IVVI, LAVS…GIIA, and LFGT…IVAL.

Belongs to the H(+)-translocating pyrophosphatase (TC 3.A.10) family. Homodimer. Requires Mg(2+) as cofactor.

Its subcellular location is the cell inner membrane. The catalysed reaction is diphosphate + H2O + H(+)(in) = 2 phosphate + 2 H(+)(out). Its function is as follows. Proton pump that utilizes the energy of pyrophosphate hydrolysis as the driving force for proton movement across the membrane. Generates a proton motive force. The sequence is that of Pyrophosphate-energized proton pump 2 (hppA2) from Mycoplana dimorpha.